Reading from the N-terminus, the 227-residue chain is MEPAPLVRPRSYVVRGRKTDAQQRAIAEFWPAFGVDFAGGLLDLDALFGRTAPRTVEIGFGNGENLLALAERHPERDFLGVEVHGAGVGRVFAAMRERGLSNIRVIRHDAVEVFETGLSAGSVAEALLFFPDPWPKARHHRRRLVQPDVVRLLARALAADGVLRLATDWEPYADHMLAVLDAEPVLVNVAGPGAFIPRPEARPVTKFERRGEKLGHSIFDLEYRPLP.

S-adenosyl-L-methionine contacts are provided by Glu57, Glu82, Asp109, and Asp132. Asp132 is an active-site residue. Substrate contacts are provided by residues Lys136, Asp168, and 205-208 (TKFE).

The protein belongs to the class I-like SAM-binding methyltransferase superfamily. TrmB family.

The catalysed reaction is guanosine(46) in tRNA + S-adenosyl-L-methionine = N(7)-methylguanosine(46) in tRNA + S-adenosyl-L-homocysteine. The protein operates within tRNA modification; N(7)-methylguanine-tRNA biosynthesis. Its function is as follows. Catalyzes the formation of N(7)-methylguanine at position 46 (m7G46) in tRNA. The protein is tRNA (guanine-N(7)-)-methyltransferase of Leifsonia xyli subsp. xyli (strain CTCB07).